The chain runs to 174 residues: MTTGVAVMSSATAASTATATAAATARIPLFLSRNNSSATVCSTLRCRTITRTRTRARLAICCEVALKSDSSTGFDSSSSSPPEEDEELKKNLEKVGCKVKVKSPLKVYHVPKLPEVELTPDMVGVIKQYVGFWKGKYISPNYPFKVEYRIDVPDRGSVKLVVHLKEEEFEIIAE.

A chloroplast-targeting transit peptide spans 1-62 (MTTGVAVMSS…RTRARLAICC (62 aa)). Residues 69 to 81 (DSSTGFDSSSSSP) are compositionally biased toward low complexity. Residues 69 to 89 (DSSTGFDSSSSSPPEEDEELK) form a disordered region. Serine 70 and serine 71 each carry phosphoserine.

This sequence belongs to the ferredoxin thioredoxin reductase alpha subunit family. As to quaternary structure, heterodimer of subunit A (variable subunit) and subunit B (catalytic subunit). Heterodimeric FTR forms a complex with ferredoxin and thioredoxin.

It is found in the plastid. It localises to the chloroplast. In terms of biological role, variable subunit of the ferredoxin-thioredoxin reductase (FTR), which catalyzes the two-electron reduction of thioredoxins by the electrons provided by reduced ferredoxin. The sequence is that of Ferredoxin-thioredoxin reductase, variable chain, chloroplastic (FTRV) from Spinacia oleracea (Spinach).